Here is a 379-residue protein sequence, read N- to C-terminus: tRNA (guanine(26)-N(2))-dimethyltransferase (379 aa).

Residues 4 to 375 enclose the Trm1 methyltransferase domain; that stretch reads VEVLEGKAKI…APYEVFVNVL (372 aa). 5 residues coordinate S-adenosyl-L-methionine: R36, R61, D78, D120, and A121.

It belongs to the class I-like SAM-binding methyltransferase superfamily. Trm1 family.

It catalyses the reaction guanosine(26) in tRNA + 2 S-adenosyl-L-methionine = N(2)-dimethylguanosine(26) in tRNA + 2 S-adenosyl-L-homocysteine + 2 H(+). Functionally, dimethylates a single guanine residue at position 26 of a number of tRNAs using S-adenosyl-L-methionine as donor of the methyl groups. The protein is tRNA (guanine(26)-N(2))-dimethyltransferase of Pyrococcus abyssi (strain GE5 / Orsay).